Here is a 266-residue protein sequence, read N- to C-terminus: Isopentenyl phosphate kinase (266 aa).

An ATP-binding site is contributed by 5-9 (KLGGS). Substrate is bound at residue alanine 47. Position 48 (glycine 48) interacts with ATP. Histidine 52 and glycine 157 together coordinate substrate. Residues aspartate 178, 183–188 (YTRNPK), glycine 219, and lysine 223 each bind ATP.

The protein belongs to the isopentenyl phosphate kinase family. As to quaternary structure, homodimer.

It catalyses the reaction isopentenyl phosphate + ATP = isopentenyl diphosphate + ADP. Functionally, catalyzes the formation of isopentenyl diphosphate (IPP), the building block of all isoprenoids. Has lower activity with dimethylallyl phosphate (DMAP) and isopentenyl thiolophosphate (ISP). Has low activity with 1-butyl phosphate (BP) and 3-buten-1-yl phosphate (BEP). Has no significant activity with geranyl phosphate (in vitro). The protein is Isopentenyl phosphate kinase of Methanothermobacter thermautotrophicus (strain ATCC 29096 / DSM 1053 / JCM 10044 / NBRC 100330 / Delta H) (Methanobacterium thermoautotrophicum).